A 283-amino-acid polypeptide reads, in one-letter code: Formamidopyrimidine-DNA glycosylase (283 aa).

The Schiff-base intermediate with DNA role is filled by proline 2. The active-site Proton donor is glutamate 3. Lysine 60 serves as the catalytic Proton donor; for beta-elimination activity. DNA contacts are provided by histidine 100, arginine 119, and arginine 164. An FPG-type zinc finger spans residues 249–283 (WVYNRAGEPCKVCGDVIQRIKLGGRSSHFCRQCQV). The active-site Proton donor; for delta-elimination activity is arginine 273.

The protein belongs to the FPG family. Monomer. Zn(2+) serves as cofactor.

The catalysed reaction is Hydrolysis of DNA containing ring-opened 7-methylguanine residues, releasing 2,6-diamino-4-hydroxy-5-(N-methyl)formamidopyrimidine.. It carries out the reaction 2'-deoxyribonucleotide-(2'-deoxyribose 5'-phosphate)-2'-deoxyribonucleotide-DNA = a 3'-end 2'-deoxyribonucleotide-(2,3-dehydro-2,3-deoxyribose 5'-phosphate)-DNA + a 5'-end 5'-phospho-2'-deoxyribonucleoside-DNA + H(+). Functionally, involved in base excision repair of DNA damaged by oxidation or by mutagenic agents. Acts as a DNA glycosylase that recognizes and removes damaged bases. Has a preference for oxidized purines, such as 7,8-dihydro-8-oxoguanine (8-oxoG). Has AP (apurinic/apyrimidinic) lyase activity and introduces nicks in the DNA strand. Cleaves the DNA backbone by beta-delta elimination to generate a single-strand break at the site of the removed base with both 3'- and 5'-phosphates. The sequence is that of Formamidopyrimidine-DNA glycosylase from Nostoc sp. (strain PCC 7120 / SAG 25.82 / UTEX 2576).